The following is a 217-amino-acid chain: MKLNQDSLTSKFGSPIERVEQAIKSVQQGNGVLLLDDESRENEGDLIYSVDHLTSEQMALMIRSCSGIVCLCLTEDKADYLELSPMVEHNESVNQTAFTISIEAKKGVTTGVSATDRVTTIKTACKNGALPHELAKPGHVFPLRAKDGGVLTRRGHTEGTVDLMRLAELTPAGVLCEVTNSDGSMAKTPEIIIFAEQHHLPVLTVNDIALYRKEKSN.

Residues 40–41 (RE), Asp45, 153–157 (RRGHT), and Glu177 contribute to the D-ribulose 5-phosphate site. Residue Glu41 participates in Mg(2+) binding. His156 is a Mg(2+) binding site.

Belongs to the DHBP synthase family. Homodimer. Mg(2+) serves as cofactor. Requires Mn(2+) as cofactor.

The catalysed reaction is D-ribulose 5-phosphate = (2S)-2-hydroxy-3-oxobutyl phosphate + formate + H(+). Its pathway is cofactor biosynthesis; riboflavin biosynthesis; 2-hydroxy-3-oxobutyl phosphate from D-ribulose 5-phosphate: step 1/1. Its function is as follows. Catalyzes the conversion of D-ribulose 5-phosphate to formate and 3,4-dihydroxy-2-butanone 4-phosphate. The protein is 3,4-dihydroxy-2-butanone 4-phosphate synthase of Aliivibrio fischeri (Vibrio fischeri).